Reading from the N-terminus, the 470-residue chain is ATP synthase subunit beta (470 aa).

155-162 (GGAGVGKT) is an ATP binding site.

Belongs to the ATPase alpha/beta chains family. As to quaternary structure, F-type ATPases have 2 components, CF(1) - the catalytic core - and CF(0) - the membrane proton channel. CF(1) has five subunits: alpha(3), beta(3), gamma(1), delta(1), epsilon(1). CF(0) has three main subunits: a(1), b(2) and c(9-12). The alpha and beta chains form an alternating ring which encloses part of the gamma chain. CF(1) is attached to CF(0) by a central stalk formed by the gamma and epsilon chains, while a peripheral stalk is formed by the delta and b chains.

The protein resides in the cell membrane. It catalyses the reaction ATP + H2O + 4 H(+)(in) = ADP + phosphate + 5 H(+)(out). Its function is as follows. Produces ATP from ADP in the presence of a proton gradient across the membrane. The catalytic sites are hosted primarily by the beta subunits. This chain is ATP synthase subunit beta, found in Staphylococcus haemolyticus (strain JCSC1435).